We begin with the raw amino-acid sequence, 640 residues long: Threonine--tRNA ligase (640 aa).

The TGS domain occupies 1-63 (MSSVTVTLPD…SEDCEIEIVT (63 aa)). The tract at residues 242 to 533 (DHRKLGREMD…LIEHYNGRFP (292 aa)) is catalytic. Zn(2+) is bound by residues C334, H385, and H510.

This sequence belongs to the class-II aminoacyl-tRNA synthetase family. In terms of assembly, homodimer. Requires Zn(2+) as cofactor.

It is found in the cytoplasm. The enzyme catalyses tRNA(Thr) + L-threonine + ATP = L-threonyl-tRNA(Thr) + AMP + diphosphate + H(+). In terms of biological role, catalyzes the attachment of threonine to tRNA(Thr) in a two-step reaction: L-threonine is first activated by ATP to form Thr-AMP and then transferred to the acceptor end of tRNA(Thr). The chain is Threonine--tRNA ligase from Halobacterium salinarum (strain ATCC 29341 / DSM 671 / R1).